A 329-amino-acid chain; its full sequence is Nuclear pore complex protein NUP35 (329 aa).

Disordered stretches follow at residues 48–105 and 123–167; these read NFGG…GKGK and VSGS…PPRE. Residues 123–139 are compositionally biased toward polar residues; sequence VSGSPSWWSQSKAGSST. Positions 183–264 constitute an RRM Nup35-type domain; the sequence is LDEEEWVTVY…KPVDPIQKQA (82 aa). Residues 271 to 315 form a disordered region; that stretch reads NQGFMPLPPPSSTRNTARPLSRPQYLQNGSAFSPQPSGGAMASPS. The span at 282–306 shows a compositional bias: polar residues; it reads STRNTARPLSRPQYLQNGSAFSPQP.

The protein belongs to the Nup35 family. In terms of assembly, part of the nuclear pore complex (NPC). The NPC has an eight-fold symmetrical structure comprising a central transport channel and two rings, the cytoplasmic and nuclear rings, to which eight filaments are attached. The cytoplasmic filaments have loose ends, while the nuclear filaments are joined in a distal ring, forming a nuclear basket. NPCs are highly dynamic in configuration and composition, and can be devided in 3 subcomplexes, the NUP62 subcomplex, the NUP107-160 subcomplex and the NUP93 subcomplex, containing approximately 30 different nucleoporin proteins.

The protein localises to the nucleus. Its subcellular location is the nuclear pore complex. The polypeptide is Nuclear pore complex protein NUP35 (Arabidopsis thaliana (Mouse-ear cress)).